We begin with the raw amino-acid sequence, 279 residues long: uncharacterized protein (279 aa).

Positions 136 to 279 (TSNATEASEK…FTSDSSDEED (144 aa)) are disordered. The segment covering 228-238 (NNGNGAVYSDS) has biased composition (low complexity).

This is an uncharacterized protein from Invertebrate iridescent virus 3 (IIV-3).